We begin with the raw amino-acid sequence, 128 residues long: uncharacterized protein (128 aa).

Positions 95–123 form a coiled coil; that stretch reads IIDFATAKRELDRLTEEIATLKGELAQDK.

The protein resides in the cellular thylakoid membrane. This is an uncharacterized protein from Synechocystis sp. (strain ATCC 27184 / PCC 6803 / Kazusa).